The chain runs to 451 residues: Tubby-like F-box protein 12 (451 aa).

One can recognise an F-box domain in the interval 57–112 (SRWVGLPPELLRDVMKRLEEGESNWPSRKDVVACAAVCRTWREICKDIVQSPEICG). A compositionally biased stretch (low complexity) spans 387–406 (LEQQQQQQQQNHASSSSSAS). The disordered stretch occupies residues 387–407 (LEQQQQQQQQNHASSSSSASD).

This sequence belongs to the TUB family. As to expression, ubiquitous.

In Oryza sativa subsp. japonica (Rice), this protein is Tubby-like F-box protein 12 (TULP12).